The chain runs to 34 residues: Photosystem I reaction center subunit XII (34 aa).

A helical transmembrane segment spans residues 10–32 (IYIALVVAAHAAILALRLSVSLY).

Belongs to the PsaM family.

It localises to the cellular thylakoid membrane. The chain is Photosystem I reaction center subunit XII from Synechococcus sp. (strain RCC307).